A 235-amino-acid chain; its full sequence is Cytidylate kinase (235 aa).

Position 11-19 (11-19 (GPSGVGKST)) interacts with ATP.

The protein belongs to the cytidylate kinase family. Type 1 subfamily.

It is found in the cytoplasm. It carries out the reaction CMP + ATP = CDP + ADP. The enzyme catalyses dCMP + ATP = dCDP + ADP. The protein is Cytidylate kinase of Syntrophotalea carbinolica (strain DSM 2380 / NBRC 103641 / GraBd1) (Pelobacter carbinolicus).